A 178-amino-acid polypeptide reads, in one-letter code: Peptide deformylase (178 aa).

Fe cation-binding residues include Cys-102 and His-144. Residue Glu-145 is part of the active site. His-148 provides a ligand contact to Fe cation.

This sequence belongs to the polypeptide deformylase family. Requires Fe(2+) as cofactor.

The catalysed reaction is N-terminal N-formyl-L-methionyl-[peptide] + H2O = N-terminal L-methionyl-[peptide] + formate. Its function is as follows. Removes the formyl group from the N-terminal Met of newly synthesized proteins. Requires at least a dipeptide for an efficient rate of reaction. N-terminal L-methionine is a prerequisite for activity but the enzyme has broad specificity at other positions. This is Peptide deformylase from Leptospira interrogans serogroup Icterohaemorrhagiae serovar copenhageni (strain Fiocruz L1-130).